The following is a 500-amino-acid chain: Lysine--tRNA ligase (500 aa).

2 residues coordinate Mg(2+): glutamate 410 and glutamate 417.

This sequence belongs to the class-II aminoacyl-tRNA synthetase family. As to quaternary structure, homodimer. It depends on Mg(2+) as a cofactor.

The protein localises to the cytoplasm. It carries out the reaction tRNA(Lys) + L-lysine + ATP = L-lysyl-tRNA(Lys) + AMP + diphosphate. The sequence is that of Lysine--tRNA ligase from Shewanella putrefaciens (strain CN-32 / ATCC BAA-453).